A 467-amino-acid chain; its full sequence is 3-isopropylmalate dehydratase large subunit (467 aa).

[4Fe-4S] cluster is bound by residues C349, C408, and C411.

This sequence belongs to the aconitase/IPM isomerase family. LeuC type 1 subfamily. In terms of assembly, heterodimer of LeuC and LeuD. Requires [4Fe-4S] cluster as cofactor.

It carries out the reaction (2R,3S)-3-isopropylmalate = (2S)-2-isopropylmalate. The protein operates within amino-acid biosynthesis; L-leucine biosynthesis; L-leucine from 3-methyl-2-oxobutanoate: step 2/4. In terms of biological role, catalyzes the isomerization between 2-isopropylmalate and 3-isopropylmalate, via the formation of 2-isopropylmaleate. This is 3-isopropylmalate dehydratase large subunit from Dinoroseobacter shibae (strain DSM 16493 / NCIMB 14021 / DFL 12).